Consider the following 193-residue polypeptide: Ferredoxin-2, mitochondrial (193 aa).

Positions 38-70 (QATPEKLETSNEEEGSSSAQITAGVESDAENQR) are disordered. The 103-residue stretch at 78–180 (VEVVFLDRSG…GAEFTLPKIT (103 aa)) folds into the 2Fe-2S ferredoxin-type domain. Residues Cys-115, Cys-121, Cys-124, and Cys-161 each coordinate [2Fe-2S] cluster.

It belongs to the adrenodoxin/putidaredoxin family. Component of the mitochondrial core iron-sulfur cluster (ISC) complex composed of NFS1, LYRM4, NDUFAB1, ISCU, FXN, and FDX2; this complex is a heterohexamer containing two copies of each monomer. [2Fe-2S] cluster serves as cofactor.

It localises to the mitochondrion. The protein resides in the mitochondrion matrix. In terms of biological role, electron donor, of the core iron-sulfur cluster (ISC) assembly complex, that acts to reduce the persulfide into sulfide during [2Fe-2S] clusters assembly on the scaffolding protein ISCU. The core iron-sulfur cluster (ISC) assembly complex is involved in the de novo synthesis of a [2Fe-2S] cluster, the first step of the mitochondrial iron-sulfur protein biogenesis. This process is initiated by the cysteine desulfurase complex (NFS1:LYRM4:NDUFAB1) that produces persulfide which is delivered on the scaffold protein ISCU in a FXN-dependent manner. Then this complex is stabilized by FDX2 which provides reducing equivalents to accomplish the [2Fe-2S] cluster assembly. Finally, the [2Fe-2S] cluster is transferred from ISCU to chaperone proteins, including HSCB, HSPA9 and GLRX5. Essential for coenzyme Q biosynthesis: together with FDXR, transfers the electrons required for the hydroxylation reaction performed by COQ6. In Xenopus laevis (African clawed frog), this protein is Ferredoxin-2, mitochondrial.